The following is an 813-amino-acid chain: Palmitoyltransferase AKR1 (813 aa).

A disordered region spans residues 1–83; that stretch reads MAKKKSKSKS…PVTTSNETDP (83 aa). Topologically, residues 1–387 are cytoplasmic; that stretch reads MAKKKSKSKS…KPWVSAKLGK (387 aa). Positions 9–24 are enriched in low complexity; sequence KSSSPKPKVSSTAAKP. The span at 28 to 46 shows a compositional bias: polar residues; that stretch reads DNQQNIENVQDSPSALQQQ. Residues 47–78 are compositionally biased toward low complexity; the sequence is SATAEESENTATTATPSEGTTATTESSPVTTS. ANK repeat units lie at residues 133 to 162, 167 to 196, 201 to 231, 235 to 264, 276 to 305, and 309 to 338; these read PTLA…VLVN, DEIT…NPNQ, LKAS…DPNL, QTYN…STDS, SNRT…DVSK, and SLFI…DIYF. Residues 388–408 form a helical membrane-spanning segment; the sequence is IITFLTPYFLLPLSFNVLSMG. Over 409–412 the chain is Lumenal; sequence GDQG. A helical membrane pass occupies residues 413 to 433; it reads GFIIPKLILAIGILGGGIYLL. Residues 434–452 lie on the Cytoplasmic side of the membrane; it reads NKLIISQYIFDDKKLAKSP. A helical transmembrane segment spans residues 453-473; it reads ILAGVFSATAFWSVLVWLYNI. Residues 474-485 lie on the Lumenal side of the membrane; the sequence is LPTTFIHNFFAN. Residues 486-506 form a helical membrane-spanning segment; that stretch reads VIMAILIAIFTWSFFKAMFIN. The Cytoplasmic segment spans residues 507-579; sequence PGFVPTPADN…YNDIGVRNHK (73 aa). The DHHC domain occupies 536 to 586; the sequence is HFCVNSFVRKPLRSRYSKHNKRLIARFDHSCPWVYNDIGVRNHKIFITFVY. The active-site S-palmitoyl cysteine intermediate is the C566. Residues 580-600 form a helical membrane-spanning segment; it reads IFITFVYSLNMAIFVFLYLSL. At 601–642 the chain is on the lumenal side; sequence QYFDKVKDQYDSDDEGEGEGFVCSILGDDMCYGYKNHHFHFN. The chain crosses the membrane as a helical span at residues 643 to 663; that stretch reads VFMWDLFQCVWVSFLCIVQTF. At 664 to 813 the chain is on the cytoplasmic side; sequence QILKGLTTWE…VDYYTLYSYH (150 aa).

The protein belongs to the DHHC palmitoyltransferase family. AKR/ZDHHC17 subfamily.

It is found in the early endosome membrane. It localises to the golgi apparatus membrane. The catalysed reaction is L-cysteinyl-[protein] + hexadecanoyl-CoA = S-hexadecanoyl-L-cysteinyl-[protein] + CoA. Its function is as follows. Palmitoyltransferase specific for casein kinase 1. The chain is Palmitoyltransferase AKR1 (AKR1) from Candida albicans (strain SC5314 / ATCC MYA-2876) (Yeast).